A 236-amino-acid polypeptide reads, in one-letter code: Lipoarabinomannan carrier protein LprG (236 aa).

The signal sequence occupies residues M1–G25. A lipid anchor (N-palmitoyl cysteine) is attached at C26. C26 carries the S-diacylglycerol cysteine lipid modification.

The protein belongs to the LppX/LprAFG lipoprotein family. As to quaternary structure, interacts with itself, Ag85A (MSMEG_6398), LppI (MSMEG_3851) and LppK (MSMEG_3904) in vivo.

It localises to the cell inner membrane. It is found in the secreted. The protein localises to the cell wall. Its function is as follows. Helps membrane protein MSMEG_3069/MSMEI_2992 (P55) transport triacylglycerides (TAG) across the inner cell membrane into the periplasm and probably ultimately to the outer membrane. Binds TAG in its hydrophobic cavity and transfers it between lipid bilayers. TAG probably regulates lipid metabolism and growth regulation and plays a structural role in the outer membrane. Also binds mannosides, lipoarabinomannan and lipomannan and various glycolipids in the same cavity. Required for MSMEG_3069/MSMEI_2992 export activity. Export of ethidium bromide by MSMEG_3069/MSMEI_2992 can be complemented by the equivalent operon from M.tuberculosis (lprG-Rv1410c). Involved in mycolylation. The chain is Lipoarabinomannan carrier protein LprG from Mycolicibacterium smegmatis (strain ATCC 700084 / mc(2)155) (Mycobacterium smegmatis).